Reading from the N-terminus, the 176-residue chain is Ribosome maturation factor RimM (176 aa).

The PRC barrel domain maps to 93 to 172 (KDEFFYFDII…KIQVKNSLDI (80 aa)).

The protein belongs to the RimM family. As to quaternary structure, binds ribosomal protein uS19.

It is found in the cytoplasm. Functionally, an accessory protein needed during the final step in the assembly of 30S ribosomal subunit, possibly for assembly of the head region. Essential for efficient processing of 16S rRNA. May be needed both before and after RbfA during the maturation of 16S rRNA. It has affinity for free ribosomal 30S subunits but not for 70S ribosomes. The protein is Ribosome maturation factor RimM of Campylobacter fetus subsp. fetus (strain 82-40).